The following is a 312-amino-acid chain: Olfactory receptor 6B2 (312 aa).

Residues 1 to 25 lie on the Extracellular side of the membrane; sequence MSGENVTKVSTFILVGLPTAPGLQY. N5 carries an N-linked (GlcNAc...) asparagine glycan. A helical membrane pass occupies residues 26-46; the sequence is LLFLLFLLTYLFVLVENLAII. At 47–54 the chain is on the cytoplasmic side; the sequence is LIVWSSTS. Residues 55–75 form a helical membrane-spanning segment; the sequence is LHRPMYYFLSSMSFLEIWYVS. Residues 76-99 are Extracellular-facing; sequence DITPKMLEGFLLQQKRISFVGCMT. C97 and C189 form a disulfide bridge. Residues 100–120 traverse the membrane as a helical segment; that stretch reads QLYFFSSLVCTECVLLASMAY. Residues 121-139 lie on the Cytoplasmic side of the membrane; sequence DRYVAICHPLRYHVLVTPG. A helical membrane pass occupies residues 140-160; it reads LCLQLVGFSFVSGFTISMIKV. Topologically, residues 161–196 are extracellular; it reads CFISSVTFCGSNVLNHFFCDISPILKLACTDFSTAE. A helical transmembrane segment spans residues 197–217; sequence LVDFILAFIILVFPLLATILS. At 218–237 the chain is on the cytoplasmic side; sequence YWHITLAVLRIPSATGCWRA. Residues 238–258 form a helical membrane-spanning segment; sequence FSTCASHLTVVTVFYTALLFM. Residues 259 to 271 are Extracellular-facing; sequence YVRPQAIDSQSSN. A helical transmembrane segment spans residues 272–292; it reads KLISAVYTVVTPIINPLIYCL. Topologically, residues 293-312 are cytoplasmic; that stretch reads RNKEFKDALKKALGLGQTSH.

The protein belongs to the G-protein coupled receptor 1 family.

The protein resides in the cell membrane. Functionally, odorant receptor. This chain is Olfactory receptor 6B2 (OR6B2), found in Homo sapiens (Human).